The chain runs to 875 residues: Serrate RNA effector molecule homolog (875 aa).

The tract at residues 1–90 is disordered; it reads MGDSDDEYDR…RRDWDEHSSD (90 aa). N-acetylglycine is present on Gly-2. At Ser-4 the chain carries Phosphoserine. Residue Tyr-8 is modified to Phosphotyrosine. Residues 8–73 are compositionally biased toward basic and acidic residues; sequence YDRRRRDKFR…ERFSPPRHEL (66 aa). A phosphoserine mark is found at Ser-67, Ser-74, and Ser-136. Residue Lys-150 forms a Glycyl lysine isopeptide (Lys-Gly) (interchain with G-Cter in SUMO2) linkage. The segment at 272–411 is disordered; sequence EEEEQAGKTG…KPKDAAGLEC (140 aa). Basic and acidic residues predominate over residues 297 to 345; the sequence is EGERKANDKDEKKEDGKQAENDSSNDDKTKKSEGDGDKEEKKEEAEKEA. Positions 369 to 386 are enriched in acidic residues; it reads SESESEGGQAEEEKEEAE. Over residues 387-411 the composition is skewed to basic and acidic residues; it reads EALKEKEKPKEEEKEKPKDAAGLEC. Residues Ser-492 and Ser-539 each carry the phosphoserine modification. Thr-543 bears the Phosphothreonine mark. Ser-569 carries the post-translational modification Phosphoserine. The disordered stretch occupies residues 571–597; the sequence is EEEELLGSSGGPPPEEPPKEGNPAEIN. Thr-670 is modified (phosphothreonine). Residue Ser-678 is modified to Phosphoserine. Omega-N-methylarginine occurs at positions 832, 839, and 849. The tract at residues 834-853 is disordered; the sequence is NYDAFRGQGGYPGKPRNRMV.

The protein belongs to the ARS2 family. Interacts with CASP8AP2 and ERBB4. Interacts with NCBP1/CBP80 and DROSHA. Interacts with LUZP4. Interacts with NCBP2/CBP20 and NCBP3. Interacts with MTREX. As to expression, widely expressed, with a preference for proliferating cells. Highly expressed in hematopoietic tissues and reduced or absent expression in parenchymal organs like liver and kidney. In the brain, expressed in the subventricular zone by niche astrocytes, ependymal cells and neural stem cells. In this cerebral context, expressed in slowly dividing cells.

The protein resides in the nucleus. It localises to the nucleoplasm. It is found in the cytoplasm. Its function is as follows. Acts as a mediator between the cap-binding complex (CBC) and the primary microRNAs (miRNAs) processing machinery during cell proliferation. Contributes to the stability and delivery of capped primary miRNA transcripts to the primary miRNA processing complex containing DGCR8 and DROSHA, thereby playing a role in RNA-mediated gene silencing (RNAi) by miRNAs. Binds capped RNAs (m7GpppG-capped RNA); however interaction is probably mediated via its interaction with NCBP1/CBP80 component of the CBC complex. Involved in cell cycle progression at S phase. Does not directly confer arsenite resistance but rather modulates arsenic sensitivity. Independently of its activity on miRNAs, necessary and sufficient to promote neural stem cell self-renewal. Does so by directly binding SOX2 promoter and positively regulating its transcription. In Mus musculus (Mouse), this protein is Serrate RNA effector molecule homolog (Srrt).